We begin with the raw amino-acid sequence, 156 residues long: MSRRHRAEKREINPDPKFGDLIVTKFMNAIMLDGKKSVAESIVYGAFDAVQGKAKQEPLGVFHQALDNIAPHVEVRSRRVGGATYQVPVDVRPERRQALAIRWLITAARKRNETTMVDRLCGELLDASNNRGSAVKKREDTHKMADANRAFSHYRW.

It belongs to the universal ribosomal protein uS7 family. Part of the 30S ribosomal subunit. Contacts proteins S9 and S11.

In terms of biological role, one of the primary rRNA binding proteins, it binds directly to 16S rRNA where it nucleates assembly of the head domain of the 30S subunit. Is located at the subunit interface close to the decoding center, probably blocks exit of the E-site tRNA. In Rhizobium rhizogenes (strain K84 / ATCC BAA-868) (Agrobacterium radiobacter), this protein is Small ribosomal subunit protein uS7.